A 242-amino-acid chain; its full sequence is Methylthioribulose-1-phosphate dehydratase (242 aa).

Over residues 1–11 (MAQEIQKENND) the composition is skewed to basic and acidic residues. Positions 1 to 20 (MAQEIQKENNDHLVQSSDPE) are disordered. Cysteine 100 provides a ligand contact to substrate. The Zn(2+) site is built by histidine 117 and histidine 119. The Proton donor/acceptor role is filled by glutamate 146. Histidine 202 is a Zn(2+) binding site.

The protein belongs to the aldolase class II family. MtnB subfamily. Zn(2+) is required as a cofactor.

It is found in the cytoplasm. The catalysed reaction is 5-(methylsulfanyl)-D-ribulose 1-phosphate = 5-methylsulfanyl-2,3-dioxopentyl phosphate + H2O. Its pathway is amino-acid biosynthesis; L-methionine biosynthesis via salvage pathway; L-methionine from S-methyl-5-thio-alpha-D-ribose 1-phosphate: step 2/6. In terms of biological role, catalyzes the dehydration of methylthioribulose-1-phosphate (MTRu-1-P) into 2,3-diketo-5-methylthiopentyl-1-phosphate (DK-MTP-1-P). This Aspergillus niger (strain ATCC MYA-4892 / CBS 513.88 / FGSC A1513) protein is Methylthioribulose-1-phosphate dehydratase.